We begin with the raw amino-acid sequence, 254 residues long: Uridine-cytidine kinase 1 (254 aa).

The interval 1-29 (MASAGGDECEGAAPEADRPHQRPFLIGVS) is disordered. 30–38 (GGTASGKST) contributes to the ATP binding site. Substrate contacts are provided by aspartate 87, tyrosine 115, histidine 120, arginine 146, arginine 155, and glutamine 163. ATP is bound at residue aspartate 192. Positions 224-254 (SYKRTFSEPGDHPGMLTSGKRSHLESSSRPH) are disordered. The residue at position 228 (threonine 228) is a Phosphothreonine. Serine 230 is modified (phosphoserine). Residues 245-254 (SHLESSSRPH) show a composition bias toward basic and acidic residues.

It belongs to the uridine kinase family.

The catalysed reaction is uridine + ATP = UMP + ADP + H(+). It catalyses the reaction cytidine + ATP = CMP + ADP + H(+). It functions in the pathway pyrimidine metabolism; CTP biosynthesis via salvage pathway; CTP from cytidine: step 1/3. It participates in pyrimidine metabolism; UMP biosynthesis via salvage pathway; UMP from uridine: step 1/1. In terms of biological role, phosphorylates uridine and cytidine to uridine monophosphate and cytidine monophosphate. Does not phosphorylate deoxyribonucleosides or purine ribonucleosides. Can use ATP or GTP as a phosphate donor. This Macaca fascicularis (Crab-eating macaque) protein is Uridine-cytidine kinase 1 (UCK1).